A 266-amino-acid polypeptide reads, in one-letter code: MDTFQVIILALIQGLTEFLPISSSAHLILPAQLLGWEDQGLSFDVAVNTGSLLAVVMYFRRELLSMFTAWTSSIVTGKQTQESKLSWWIILATIPAVIVGFSAKGFIETHFRSIEVIAATTIIFGLLLWWADKMQREGFNEFQVGWKKALVIGIAQAMALIPGTSRSGATITAALMLGLSREAAARFSFLMSVPVSLGAAILVTKDLLDSGQVIDYQALGLGIVVSFIAAYICIHYFLKIISKMGMTPFVVYRLALGAVLCGFIFL.

Transmembrane regions (helical) follow at residues 1–21 (MDTF…FLPI), 39–59 (QGLS…VMYF), 87–107 (WWII…KGFI), 111–131 (FRSI…LWWA), 144–164 (VGWK…IPGT), 183–203 (AAAR…AILV), 218–238 (ALGL…HYFL), and 246–266 (MTPF…FIFL).

Belongs to the UppP family.

The protein localises to the cell inner membrane. The catalysed reaction is di-trans,octa-cis-undecaprenyl diphosphate + H2O = di-trans,octa-cis-undecaprenyl phosphate + phosphate + H(+). In terms of biological role, catalyzes the dephosphorylation of undecaprenyl diphosphate (UPP). Confers resistance to bacitracin. The polypeptide is Undecaprenyl-diphosphatase (Shewanella halifaxensis (strain HAW-EB4)).